A 760-amino-acid chain; its full sequence is DEAD-box ATP-dependent RNA helicase 24 (760 aa).

Disordered regions lie at residues 1–76 and 90–113; these read MSNR…GEVD and QEMK…DDDD. Residues 14-27 are compositionally biased toward polar residues; that stretch reads NRQTSYSFERSQAP. A compositionally biased stretch (acidic residues) spans 41–64; sequence NSEDADLDNIDYMENEEAEEDIEE. Over residues 99 to 109 the composition is skewed to basic and acidic residues; sequence KPKEKLERYKD. S160 carries the post-translational modification Phosphoserine. The Q motif motif lies at 228 to 256; it reads KTFEDCGFSSQIMSAIKKQAYEKPTAIQC. A Helicase ATP-binding domain is found at 259–434; the sequence is LPIVLSGRDV…REILSDPIRV (176 aa). Position 272-279 (272-279) interacts with ATP; sequence AKTGSGKT. The short motif at 382 to 385 is the DEAD box element; that stretch reads DEAD. The 150-residue stretch at 459–608 folds into the Helicase C-terminal domain; sequence KLPWLLEKLP…NVPPELTDLA (150 aa). Disordered stretches follow at residues 604-638, 647-666, and 706-760; these read LTDL…KGVR, GFSS…SRSG, and FVSG…GWDN. Over residues 615–628 the composition is skewed to basic residues; the sequence is KSKRDGRKGGKKGR. The span at 629–638 shows a compositional bias: gly residues; it reads GGGGGNKGVR. Positions 649–666 are enriched in polar residues; it reads SSESSRTPSSKAAPSRSG. Positions 707-716 are enriched in gly residues; it reads VSGGTIGGDM. The segment covering 718–732 has biased composition (polar residues); it reads RTQSQAPPVAPTQNA. A compositionally biased stretch (low complexity) spans 733-745; that stretch reads SSHNSSQNHSQSS. The span at 750–760 shows a compositional bias: basic residues; it reads RERKRRSGWDN.

Belongs to the DEAD box helicase family.

It catalyses the reaction ATP + H2O = ADP + phosphate + H(+). This is DEAD-box ATP-dependent RNA helicase 24 (RH24) from Arabidopsis thaliana (Mouse-ear cress).